A 510-amino-acid polypeptide reads, in one-letter code: 2,3-bisphosphoglycerate-independent phosphoglycerate mutase (510 aa).

D14 and S64 together coordinate Mn(2+). S64 serves as the catalytic Phosphoserine intermediate. Substrate is bound by residues H125, R155–D156, R187, R193, R259–R262, and K332. Positions 399, 403, 440, 441, and 459 each coordinate Mn(2+).

The protein belongs to the BPG-independent phosphoglycerate mutase family. In terms of assembly, monomer. It depends on Mn(2+) as a cofactor.

The enzyme catalyses (2R)-2-phosphoglycerate = (2R)-3-phosphoglycerate. It participates in carbohydrate degradation; glycolysis; pyruvate from D-glyceraldehyde 3-phosphate: step 3/5. Its function is as follows. Catalyzes the interconversion of 2-phosphoglycerate and 3-phosphoglycerate. This Pseudomonas syringae pv. syringae (strain B728a) protein is 2,3-bisphosphoglycerate-independent phosphoglycerate mutase.